A 450-amino-acid polypeptide reads, in one-letter code: Glucose-6-phosphate isomerase (450 aa).

Glu-291 acts as the Proton donor in catalysis. Catalysis depends on residues His-312 and Lys-426.

Belongs to the GPI family.

The protein localises to the cytoplasm. It catalyses the reaction alpha-D-glucose 6-phosphate = beta-D-fructose 6-phosphate. It functions in the pathway carbohydrate biosynthesis; gluconeogenesis. It participates in carbohydrate degradation; glycolysis; D-glyceraldehyde 3-phosphate and glycerone phosphate from D-glucose: step 2/4. Its function is as follows. Catalyzes the reversible isomerization of glucose-6-phosphate to fructose-6-phosphate. The polypeptide is Glucose-6-phosphate isomerase (Clostridium perfringens (strain ATCC 13124 / DSM 756 / JCM 1290 / NCIMB 6125 / NCTC 8237 / Type A)).